The chain runs to 747 residues: Pentatricopeptide repeat-containing protein At5g39710 (747 aa).

15 PPR repeats span residues 133-167, 168-203, 204-238, 239-273, 274-308, 309-343, 344-378, 379-413, 414-448, 449-483, 484-518, 519-553, 554-588, 604-638, and 639-673; these read TSSVFDLVVKSYSRLSLIDKALSIVHLAQAHGFMP, GVLSYNAVLDATIRSKRNISFAENVFKEMLESQVSP, NVFTYNILIRGFCFAGNIDVALTLFDKMETKGCLP, NVVTYNTLIDGYCKLRKIDDGFKLLRSMALKGLEP, NLISYNVVINGLCREGRMKEVSFVLTEMNRRGYSL, DEVTYNTLIKGYCKEGNFHQALVMHAEMLRHGLTP, SVITYTSLIHSMCKAGNMNRAMEFLDQMRVRGLCP, NERTYTTLVDGFSQKGYMNEAYRVLREMNDNGFSP, SVVTYNALINGHCVTGKMEDAIAVLEDMKEKGLSP, DVVSYSTVLSGFCRSYDVDEALRVKREMVEKGIKP, DTITYSSLIQGFCEQRRTKEACDLYEEMLRVGLPP, DEFTYTALINAYCMEGDLEKALQLHNEMVEKGVLP, DVVTYSVLINGLNKQSRTREAKRLLLKLFYEESVP, EFKSVVSLIKGFCMKGMMTEADQVFESMLGKNHKP, and DGTAYNIMIHGHCRAGDIRKAYTLYKEMVKSGFLL.

This sequence belongs to the PPR family. P subfamily.

The sequence is that of Pentatricopeptide repeat-containing protein At5g39710 (EMB2745) from Arabidopsis thaliana (Mouse-ear cress).